Reading from the N-terminus, the 362-residue chain is MGIRSTSVSDAVAALDERSREIFRRIVEGYLESGEPLGSRNLSRLLPMSLSPASVRNVMSDLEDLGLIYSPHISAGRLPTQIGLRFFVDAFMQVGDLSAEDRASIDRQVRAESGGNPVESMMNEASRMLSGISRGAGLVITSKSDPVLKHVEFIRLEPTKALAVLVGDHDQVENRIIELPAGVTSSQLAEAANFLNAHMSGQTLPELRKQLSQLKDNVRHELDALSRDLVERGIAVWAGSPDEGKPAQLIIRGRANLLEGLAGAEDLDRLRLLFDDLEKKDSLIEILNLAETGSGVRIFIGSENKLFSLSGSSLIVAPYRDDDDRIVGAVGVIGPTRLNYSRIVPMVDYTAQLVSRLSRNPL.

This sequence belongs to the HrcA family.

Functionally, negative regulator of class I heat shock genes (grpE-dnaK-dnaJ and groELS operons). Prevents heat-shock induction of these operons. The polypeptide is Heat-inducible transcription repressor HrcA (Rhizobium leguminosarum bv. trifolii (strain WSM2304)).